Consider the following 375-residue polypeptide: Trans-enoyl reductase BOA5 (375 aa).

The span at 1–16 (MQAVIQTGPGTLQLTE) shows a compositional bias: polar residues. Residues 1 to 21 (MQAVIQTGPGTLQLTENVPKP) form a disordered region. 42-45 (SDWK) contacts NADP(+). Position 121 to 128 (121 to 128 (VGIVTTGL)) interacts with substrate. Residues 147–168 (GSAAPQKTRVGPRGWSGGDALT) are disordered. NADP(+)-binding positions include 185-188 (STST), 208-211 (SPHN), tyrosine 226, and 273-274 (LD). Substrate is bound at residue 294–298 (ALTIF). 363–364 (VS) is an NADP(+) binding site.

Belongs to the zinc-containing alcohol dehydrogenase family. Monomer.

The protein operates within polyketide biosynthesis. Its function is as follows. Trans-enoyl reductase; part of the gene cluster A that mediates the biosynthesis of botcinic acid and its botcinin derivatives, acetate-derived polyketides that contribute to virulence when combined with the sesquiterpene botrydial. Botcinic acid and its derivatives have been shown to induce chlorosis and necrosis during host plant infection, but also have antifungal activities. Two polyketide synthases, BOA6 and BOA9, are involved in the biosynthesis of botcinins. BOA6 mediates the formation of the per-methylated tetraketide core by condensation of four units of malonyl-CoA with one unit of acetyl-CoA, which would be methylated in activated methylene groups to yield a bicyclic acid intermediate that could then either be converted to botrylactone derivatives or lose the starter acetate unit through a retro-Claisen type C-C bond cleavage to yield botcinin derivatives. The second polyketide synthase, BOA9, is probably required for the biosynthesis of the tetraketide side chain of botcinins. The methyltransferase (MT) domain within BOA6 is probably responsible for the incorporation of four methyl groups. The trans-enoyl reductase BOA5 might take over the enoyl reductase function of BOA6 that misses an ER domain. The monooxygenases BOA2, BOA3 and BOA4 might be involved in further hydroxylations at C4, C5 and C8, whereas BOA7, close to BOA9, could potentially be involved in the hydroxylation at C4 in the side chain of botcinins. The protein is Trans-enoyl reductase BOA5 of Botryotinia fuckeliana (strain B05.10) (Noble rot fungus).